We begin with the raw amino-acid sequence, 198 residues long: MELPDPVRQRLGNFSRTVFSDSNRTGPEYNEGPDNEMVSSLALQMSLYFNTYFFPLWWVSSIMMLQMKYSILPDYYKFIVVTIIILITLIEAIRLYLGYMGNLQEKVPELAGFWLLSLLLQLPLILFLLFNEGLTNLPLEKAVHIIFTIFLTFQVVSAFLTLRKMVNQLATRFHLQDFDRLSASRGDMRRVRSCIEEI.

N-linked (GlcNAc...) asparagine glycans are attached at residues asparagine 13 and asparagine 23. 4 helical membrane passes run 45–65 (MSLY…IMML), 78–98 (FIVV…LYLG), 110–130 (LAGF…FLLF), and 142–162 (AVHI…FLTL).

Belongs to the TMEM17 family. Part of the tectonic-like complex (also named B9 complex).

Its subcellular location is the cell projection. The protein localises to the cilium membrane. In terms of biological role, transmembrane component of the tectonic-like complex, a complex localized at the transition zone of primary cilia and acting as a barrier that prevents diffusion of transmembrane proteins between the cilia and plasma membranes. Required for ciliogenesis and sonic hedgehog/SHH signaling. This is Transmembrane protein 17 (TMEM17) from Bos taurus (Bovine).